Consider the following 233-residue polypeptide: Orotidine 5'-phosphate decarboxylase (233 aa).

Residues aspartate 9, lysine 31, 58 to 67, threonine 120, arginine 182, glutamine 191, glycine 211, and arginine 212 contribute to the substrate site; that span reads DLKLHDIPNT. Lysine 60 functions as the Proton donor in the catalytic mechanism.

Belongs to the OMP decarboxylase family. Type 1 subfamily. As to quaternary structure, homodimer.

It carries out the reaction orotidine 5'-phosphate + H(+) = UMP + CO2. It functions in the pathway pyrimidine metabolism; UMP biosynthesis via de novo pathway; UMP from orotate: step 2/2. Functionally, catalyzes the decarboxylation of orotidine 5'-monophosphate (OMP) to uridine 5'-monophosphate (UMP). In Listeria welshimeri serovar 6b (strain ATCC 35897 / DSM 20650 / CCUG 15529 / CIP 8149 / NCTC 11857 / SLCC 5334 / V8), this protein is Orotidine 5'-phosphate decarboxylase.